A 132-amino-acid chain; its full sequence is MSSKASKAPASKAPAEKKPAAKKTSSSVDASKKRTKTRKETYSSYIYKVLKQTHPDTGISQKSMSILNSFVNDIFERIASEASKLAAYNKKSTISAREIQTAVRLILPGELAKHAVSEGTRAVTKYSSSTQA.

Low complexity predominate over residues M1 to A13. Residues M1–E40 are disordered. K7 bears the N6-acetyllysine; alternate mark. A Glycyl lysine isopeptide (Lys-Gly) (interchain with G-Cter in SUMO); alternate cross-link involves residue K7. S11 bears the Phosphoserine mark. At K12 the chain carries N6-acetyllysine. N6-acetyllysine; alternate is present on K17. Residue K17 forms a Glycyl lysine isopeptide (Lys-Gly) (interchain with G-Cter in SUMO); alternate linkage. K18 is covalently cross-linked (Glycyl lysine isopeptide (Lys-Gly) (interchain with G-Cter in SUMO)). Residue K125 forms a Glycyl lysine isopeptide (Lys-Gly) (interchain with G-Cter in ubiquitin) linkage.

Belongs to the histone H2B family. The nucleosome is a histone octamer containing two molecules each of H2A, H2B, H3 and H4 assembled in one H3-H4 heterotetramer and two H2A-H2B heterodimers. The octamer wraps approximately 147 bp of DNA. Post-translationally, monoubiquitinated by the UBC2-BRE1 complex to form H2BK123ub1. H2BK123ub1 gives a specific tag for epigenetic transcriptional activation and is also prerequisite for H3K4me and H3K79me formation. H2BK123ub1 also modulates the formation of double-strand breaks during meiosis and is a prerequisite for DNA-damage checkpoint activation. In terms of processing, phosphorylated by STE20 to form H2BS10ph during progression through meiotic prophase. May be correlated with chromosome condensation. Acetylated by GCN5 to form H2BK11ac and H2BK16ac. H2BK16ac can also be formed by ESA1. Acetylation of N-terminal lysines and particularly formation of H2BK11acK16ac has a positive effect on transcription. Post-translationally, sumoylation to form H2BK6su and probably also H2BK16su or H2BK17su, occurs preferentially near the telomeres and represses gene transcription.

The protein resides in the nucleus. It is found in the chromosome. In terms of biological role, core component of nucleosome. Nucleosomes wrap and compact DNA into chromatin, limiting DNA accessibility to the cellular machineries which require DNA as a template. Histones thereby play a central role in transcription regulation, DNA repair, DNA replication and chromosomal stability. DNA accessibility is regulated via a complex set of post-translational modifications of histones, also called histone code, and nucleosome remodeling. In Eremothecium gossypii (strain ATCC 10895 / CBS 109.51 / FGSC 9923 / NRRL Y-1056) (Yeast), this protein is Histone H2B.1 (HTB1).